Reading from the N-terminus, the 172-residue chain is Small ribosomal subunit protein uS5 (172 aa).

The region spanning 16–79 is the S5 DRBM domain; it reads LKDRLVAINR…EAAKKNLIRV (64 aa).

It belongs to the universal ribosomal protein uS5 family. In terms of assembly, part of the 30S ribosomal subunit. Contacts proteins S4 and S8.

In terms of biological role, with S4 and S12 plays an important role in translational accuracy. Its function is as follows. Located at the back of the 30S subunit body where it stabilizes the conformation of the head with respect to the body. The sequence is that of Small ribosomal subunit protein uS5 from Porphyromonas gingivalis (strain ATCC BAA-308 / W83).